The primary structure comprises 432 residues: Enolase (432 aa).

Glutamine 164 provides a ligand contact to (2R)-2-phosphoglycerate. Glutamate 206 acts as the Proton donor in catalysis. Residues aspartate 243, glutamate 289, and aspartate 316 each coordinate Mg(2+). Positions 341, 370, 371, and 392 each coordinate (2R)-2-phosphoglycerate. Lysine 341 functions as the Proton acceptor in the catalytic mechanism.

The protein belongs to the enolase family. Mg(2+) serves as cofactor.

Its subcellular location is the cytoplasm. The protein localises to the secreted. It is found in the cell surface. The enzyme catalyses (2R)-2-phosphoglycerate = phosphoenolpyruvate + H2O. It functions in the pathway carbohydrate degradation; glycolysis; pyruvate from D-glyceraldehyde 3-phosphate: step 4/5. Its function is as follows. Catalyzes the reversible conversion of 2-phosphoglycerate (2-PG) into phosphoenolpyruvate (PEP). It is essential for the degradation of carbohydrates via glycolysis. This Borrelia duttonii (strain Ly) protein is Enolase.